We begin with the raw amino-acid sequence, 77 residues long: Translation initiation factor IF-1, chloroplastic (77 aa).

Residues M1–R72 enclose the S1-like domain.

The protein belongs to the IF-1 family. As to quaternary structure, component of the 30S ribosomal translation pre-initiation complex which assembles on the 30S ribosome in the order IF-2 and IF-3, IF-1 and N-formylmethionyl-tRNA(fMet); mRNA recruitment can occur at any time during PIC assembly.

The protein resides in the plastid. It is found in the chloroplast. Its function is as follows. One of the essential components for the initiation of protein synthesis. Stabilizes the binding of IF-2 and IF-3 on the 30S subunit to which N-formylmethionyl-tRNA(fMet) subsequently binds. Helps modulate mRNA selection, yielding the 30S pre-initiation complex (PIC). Upon addition of the 50S ribosomal subunit IF-1, IF-2 and IF-3 are released leaving the mature 70S translation initiation complex. The protein is Translation initiation factor IF-1, chloroplastic of Nephroselmis olivacea (Green alga).